Here is a 318-residue protein sequence, read N- to C-terminus: NADH-ubiquinone oxidoreductase chain 1 (318 aa).

8 helical membrane-spanning segments follow: residues 3–23, 69–89, 100–120, 135–155, 171–191, 223–243, 253–273, and 293–313; these read LINV…LTLL, LMFT…WIPI, LGVL…LWSG, AVAQ…SIMM, HMWL…STLA, FFLA…ILFF, ELHT…FLWV, and FLPL…TFAG.

Belongs to the complex I subunit 1 family.

It localises to the mitochondrion inner membrane. It carries out the reaction a ubiquinone + NADH + 5 H(+)(in) = a ubiquinol + NAD(+) + 4 H(+)(out). Core subunit of the mitochondrial membrane respiratory chain NADH dehydrogenase (Complex I) that is believed to belong to the minimal assembly required for catalysis. Complex I functions in the transfer of electrons from NADH to the respiratory chain. The immediate electron acceptor for the enzyme is believed to be ubiquinone. The sequence is that of NADH-ubiquinone oxidoreductase chain 1 (MT-ND1) from Dasypus novemcinctus (Nine-banded armadillo).